The chain runs to 555 residues: Glypican-6 (555 aa).

An N-terminal signal peptide occupies residues 1–23; the sequence is MPSWIGAVILPLLGLLLSLPAGA. Over residues 348–357 the composition is skewed to low complexity; that stretch reads PALRSARSAP. Disordered regions lie at residues 348 to 376 and 480 to 501; these read PALR…PTTA and GNDV…GSGC. Residue Ser529 is the site of GPI-anchor amidated serine attachment. Positions 530–555 are cleaved as a propeptide — removed in mature form; it reads SAAQRGHSLLSWSLTCIVLALQRLCR.

Belongs to the glypican family. Widely expressed. High expression in fetal kidney and lung and lower expressions in fetal liver and brain. In adult tissues, very abundant in ovary, high levels also observed in liver, kidney, small intestine and colon. Not detected in peripheral blood leukocytes. Detected in breast cancer cells (at protein level).

The protein localises to the cell membrane. It is found in the secreted. The protein resides in the extracellular space. Its function is as follows. Cell surface proteoglycan that bears heparan sulfate. Putative cell surface coreceptor for growth factors, extracellular matrix proteins, proteases and anti-proteases. Enhances migration and invasion of cancer cells through WNT5A signaling. This is Glypican-6 (GPC6) from Homo sapiens (Human).